The primary structure comprises 233 residues: 2,3,4,5-tetrahydropyridine-2,6-dicarboxylate N-acetyltransferase (233 aa).

The protein belongs to the transferase hexapeptide repeat family. DapH subfamily.

The catalysed reaction is (S)-2,3,4,5-tetrahydrodipicolinate + acetyl-CoA + H2O = L-2-acetamido-6-oxoheptanedioate + CoA. Its pathway is amino-acid biosynthesis; L-lysine biosynthesis via DAP pathway; LL-2,6-diaminopimelate from (S)-tetrahydrodipicolinate (acetylase route): step 1/3. Functionally, catalyzes the transfer of an acetyl group from acetyl-CoA to tetrahydrodipicolinate. The sequence is that of 2,3,4,5-tetrahydropyridine-2,6-dicarboxylate N-acetyltransferase from Thermotoga sp. (strain RQ2).